A 205-amino-acid polypeptide reads, in one-letter code: Small ribosomal subunit protein uS7 (205 aa).

It belongs to the universal ribosomal protein uS7 family. In terms of assembly, part of the 30S ribosomal subunit.

Functionally, one of the primary rRNA binding proteins, it binds directly to 16S rRNA where it nucleates assembly of the head domain of the 30S subunit. Is located at the subunit interface close to the decoding center. This is Small ribosomal subunit protein uS7 from Aeropyrum pernix (strain ATCC 700893 / DSM 11879 / JCM 9820 / NBRC 100138 / K1).